The chain runs to 350 residues: MAFKLASSPHLKVQLQTQSVMRRVILCALPGIAAQCYFFGFGVLIQVMLAIVVALTAEAAVLALRKRAVLSTISDNSALLTAILIGVAIPPIAPWWLVVIGTLFAIVLVKQLYGGLGQNIFNPAMAAYVMLLISFPVQMTSWSIPTAIAQNPMDIGLTLQAIFGSMSAEQLSLYKLGFDGVAMATPLDTVKTDLSLGLTTSESLTKAIFSDGYGVGWFWVNMAYLAGGLIMLKLKVIRWHISFAILGSLFVCSSFGYLLSPDTHVGPLLQLFSGATMIAAFFIATDPVTAATSVKGRLLFGTLIGVMVYVIRTYGGYPDAFAFAVLLANLCAPFIDYYVKPRTYGHRTGN.

Transmembrane regions (helical) follow at residues 37–57 (YFFG…ALTA), 68–88 (AVLS…IGVA), 89–109 (IPPI…IVLV), and 120–140 (IFNP…VQMT). Thr185 bears the FMN phosphoryl threonine mark. The next 5 membrane-spanning stretches (helical) occupy residues 212–232 (GYGV…LIML), 239–259 (WHIS…GYLL), 265–285 (VGPL…FIAT), 291–311 (ATSV…VYVI), and 315–335 (GGYP…APFI).

It belongs to the NqrB/RnfD family. The complex is composed of six subunits: RnfA, RnfB, RnfC, RnfD, RnfE and RnfG. Requires FMN as cofactor.

Its subcellular location is the cell inner membrane. Its function is as follows. Part of a membrane-bound complex that couples electron transfer with translocation of ions across the membrane. The polypeptide is Ion-translocating oxidoreductase complex subunit D (Shewanella pealeana (strain ATCC 700345 / ANG-SQ1)).